Reading from the N-terminus, the 1036-residue chain is Cellulose synthase-like protein D1 (1036 aa).

The segment at 1–99 (MASSPPKKTL…GGGDGPKMGN (99 aa)) is disordered. Polar residues-rich tracts occupy residues 9–19 (TLNSQSSSLSR) and 69–80 (NQPAGSSGSTSE). The segment covering 86–95 (NRGGGGGDGP) has biased composition (gly residues). The next 2 helical transmembrane spans lie at 178 to 198 (ILSPYRLLIVIRLVIVFFFLW) and 208 to 228 (AMWLWGLSIVCEIWFAFSWIL). Residue Asp308 is part of the active site. A disordered region spans residues 626–665 (AMHVRTQSQASQTSQASDLESDTQPLNDDPDLGLPKKFGN). A compositionally biased stretch (low complexity) spans 631–642 (TQSQASQTSQAS). Asp741 is a catalytic residue. A run of 6 helical transmembrane segments spans residues 817 to 837 (IYPFTSIFLVVYCFLPALCLF), 848 to 868 (IHFLSYLLCITVTLTLISLLE), 895 to 915 (LAAVVQGLLKVIAGIEISFTL), 938 to 958 (GLFIMPLTIIIVNLVAIVIGA), 962 to 982 (IYSVIPQWGKLMGGIFFSLWV), and 1002 to 1022 (TIVYVWSGLVSITVSLLWITI).

The protein belongs to the glycosyltransferase 2 family. Plant cellulose synthase-like D subfamily.

Its subcellular location is the golgi apparatus membrane. Functionally, thought to be a Golgi-localized beta-glycan synthase that polymerize the backbones of noncellulosic polysaccharides (hemicelluloses) of plant cell wall. The sequence is that of Cellulose synthase-like protein D1 (CSLD1) from Arabidopsis thaliana (Mouse-ear cress).